A 288-amino-acid polypeptide reads, in one-letter code: 4-diphosphocytidyl-2-C-methyl-D-erythritol kinase (288 aa).

Lys-8 is an active-site residue. Position 90 to 100 (90 to 100) interacts with ATP; the sequence is PLEAGLAGGSA. Asp-132 is an active-site residue.

This sequence belongs to the GHMP kinase family. IspE subfamily.

It catalyses the reaction 4-CDP-2-C-methyl-D-erythritol + ATP = 4-CDP-2-C-methyl-D-erythritol 2-phosphate + ADP + H(+). It functions in the pathway isoprenoid biosynthesis; isopentenyl diphosphate biosynthesis via DXP pathway; isopentenyl diphosphate from 1-deoxy-D-xylulose 5-phosphate: step 3/6. In terms of biological role, catalyzes the phosphorylation of the position 2 hydroxy group of 4-diphosphocytidyl-2C-methyl-D-erythritol. This Carboxydothermus hydrogenoformans (strain ATCC BAA-161 / DSM 6008 / Z-2901) protein is 4-diphosphocytidyl-2-C-methyl-D-erythritol kinase.